Consider the following 247-residue polypeptide: uncharacterized protein (247 aa).

Positions 200–225 (SGKYSELKTKVNDIENDLRTLSSNTN) form a coiled coil.

This is an uncharacterized protein from Acanthamoeba polyphaga (Amoeba).